The primary structure comprises 420 residues: Septin-8-A (420 aa).

Positions 39 to 305 constitute a Septin-type G domain; sequence QGFCFNILCV…ELYRRCKLEE (267 aa). Positions 49–56 are G1 motif; the sequence is GETGIGKS. GTP-binding positions include 49 to 56, Gly-104, 185 to 193, Gly-239, and Arg-254; these read GETGIGKS and KADTISKSE. The segment at 101–104 is G3 motif; sequence DTVG. The interval 184–187 is G4 motif; sequence AKAD. The stretch at 321–407 forms a coiled coil; sequence QETYEAKRKE…RRKVAAETLS (87 aa). Residues 393-420 are disordered; sequence MNAFNRRKVAAETLSLSQPLKKDKDKKN.

It belongs to the TRAFAC class TrmE-Era-EngA-EngB-Septin-like GTPase superfamily. Septin GTPase family.

The chain is Septin-8-A (sept8a) from Danio rerio (Zebrafish).